The primary structure comprises 283 residues: Undecaprenyl-diphosphatase (283 aa).

6 helical membrane-spanning segments follow: residues 47–67, 94–114, 127–147, 197–217, 227–247, and 261–281; these read PGLSVTAVIQLGSIVAVIAYF, LGIAMLIGTLPILIAGLCIKL, VPAIAVVSIVMALLLGFAELL, AARFSFLLGIPAITIAGLVEL, GGVLPVFVGICSAAVVSWLAI, and IFVVYRLLFGVLLLVWWSGSA.

It belongs to the UppP family.

It is found in the cell inner membrane. The enzyme catalyses di-trans,octa-cis-undecaprenyl diphosphate + H2O = di-trans,octa-cis-undecaprenyl phosphate + phosphate + H(+). Functionally, catalyzes the dephosphorylation of undecaprenyl diphosphate (UPP). Confers resistance to bacitracin. This Synechococcus sp. (strain CC9311) protein is Undecaprenyl-diphosphatase.